The primary structure comprises 141 residues: Putative inactive deoxyuridine 5'-triphosphate nucleotidohydrolase-like protein FLJ16323 (141 aa).

Belongs to the dUTPase family.

The sequence is that of Putative inactive deoxyuridine 5'-triphosphate nucleotidohydrolase-like protein FLJ16323 from Homo sapiens (Human).